The primary structure comprises 280 residues: 4-deoxy-L-threo-5-hexosulose-uronate ketol-isomerase 1 (280 aa).

The Zn(2+) site is built by H198, H200, E205, and H247.

This sequence belongs to the KduI family. It depends on Zn(2+) as a cofactor.

It catalyses the reaction 5-dehydro-4-deoxy-D-glucuronate = 3-deoxy-D-glycero-2,5-hexodiulosonate. It functions in the pathway glycan metabolism; pectin degradation; 2-dehydro-3-deoxy-D-gluconate from pectin: step 4/5. In terms of biological role, catalyzes the isomerization of 5-dehydro-4-deoxy-D-glucuronate to 3-deoxy-D-glycero-2,5-hexodiulosonate. The protein is 4-deoxy-L-threo-5-hexosulose-uronate ketol-isomerase 1 (kduI1) of Bacteroides thetaiotaomicron (strain ATCC 29148 / DSM 2079 / JCM 5827 / CCUG 10774 / NCTC 10582 / VPI-5482 / E50).